We begin with the raw amino-acid sequence, 96 residues long: Guanyl-specific ribonuclease Sa (96 aa).

Cys7 and Cys96 are disulfide-bonded. Glu54 serves as the catalytic Proton acceptor. His85 (proton donor) is an active-site residue.

This sequence belongs to the ribonuclease N1/T1 family.

The protein resides in the secreted. It catalyses the reaction [RNA] containing guanosine + H2O = an [RNA fragment]-3'-guanosine-3'-phosphate + a 5'-hydroxy-ribonucleotide-3'-[RNA fragment].. In Kitasatospora aureofaciens (Streptomyces aureofaciens), this protein is Guanyl-specific ribonuclease Sa (rnaSA).